A 529-amino-acid chain; its full sequence is UDP-glucuronosyltransferase 2B7 (529 aa).

The signal sequence occupies residues 1-23 (MSVKWTSVILLIQLSFCFSSGNC). N-linked (GlcNAc...) asparagine glycosylation is found at Asn67, Asn68, and Asn315. Residues 373–379 (THGGANG) and Asp398 each bind UDP-alpha-D-glucuronate. Residues 493–509 (VIGFLLVCVATVIFIVT) form a helical membrane-spanning segment.

The protein belongs to the UDP-glycosyltransferase family.

It is found in the endoplasmic reticulum membrane. It carries out the reaction glucuronate acceptor + UDP-alpha-D-glucuronate = acceptor beta-D-glucuronoside + UDP + H(+). It catalyses the reaction 17alpha-estradiol + UDP-alpha-D-glucuronate = 17alpha-estradiol 17-O-(beta-D-glucuronate) + UDP + H(+). The catalysed reaction is 17beta-estradiol + UDP-alpha-D-glucuronate = 17beta-estradiol 17-O-(beta-D-glucuronate) + UDP + H(+). The enzyme catalyses 2-hydroxy-17beta-estradiol + UDP-alpha-D-glucuronate = 2-hydroxy-17beta-estradiol 3-O-(beta-D-glucuronate) + UDP + H(+). It carries out the reaction 4-hydroxy-17beta-estradiol + UDP-alpha-D-glucuronate = 17beta-estradiol 4-O-(beta-D-glucuronate) + UDP + H(+). It catalyses the reaction 4-hydroxyestrone + UDP-alpha-D-glucuronate = estrone 4-O-(beta-D-glucuronate) + UDP + H(+). The catalysed reaction is 16alpha-hydroxyestrone + UDP-alpha-D-glucuronate = 16alpha-hydroxyestrone 16-O-(beta-D-glucuronate) + UDP + H(+). The enzyme catalyses 16alpha,17beta-estriol + UDP-alpha-D-glucuronate = 16alpha,17beta-estriol 16-O-(beta-D-glucuronate) + UDP + H(+). It carries out the reaction 16beta,17beta-estriol + UDP-alpha-D-glucuronate = 16beta,17beta-estriol 16-O-(beta-D-glucuronate) + UDP + H(+). It catalyses the reaction 16alpha,17alpha-estriol + UDP-alpha-D-glucuronate = 16alpha,17alpha-estriol 16-O-(beta-D-glucuronate) + UDP + H(+). The catalysed reaction is 16alpha,17alpha-estriol + UDP-alpha-D-glucuronate = 16alpha,17alpha-estriol 17-O-(beta-D-glucuronate) + UDP + H(+). The enzyme catalyses epitestosterone + UDP-alpha-D-glucuronate = epitestosterone 17-O-(beta-D-glucuronate) + UDP + H(+). It carries out the reaction hyodeoxycholate + UDP-alpha-D-glucuronate = hyodeoxycholate 6-O-(beta-D-glucuronate) + UDP + H(+). It catalyses the reaction hyocholate + UDP-alpha-D-glucuronate = hyocholate 6-O-(beta-D-glucuronate) + UDP + H(+). The catalysed reaction is all-trans-retinoate + UDP-alpha-D-glucuronate = all-trans-retinoyl-1-O-(beta-D-glucuronate) + UDP. The enzyme catalyses all-trans-4-hydroxyretinoate + UDP-alpha-D-glucuronate = all-trans-4-hydroxy-4-O-(beta-D-glucuronide)-retinoate + UDP + H(+). It carries out the reaction (E)-ferulate + UDP-alpha-D-glucuronate = (E)-ferulic acid beta-D-glucuronate ester + UDP. It catalyses the reaction 8-iso-prostaglandin F2alpha + UDP-alpha-D-glucuronate = 8-iso-prostaglandin F2alpha-glucuronide + UDP + H(+). The catalysed reaction is 5-epi-5-F2t-IsoP + UDP-alpha-D-glucuronate = 5-epi-5-F2t-IsoP-glucuronide + UDP + H(+). The enzyme catalyses (5Z,8Z,11Z,14Z)-eicosatetraenoate + UDP-alpha-D-glucuronate = O-[(5Z),(8Z),(11Z),(14Z)-eicosatetraenoyl]-beta-D-glucuronate + UDP. It carries out the reaction 15-hydroxy-(5Z,8Z,11Z,13E)-eicosatetraenoate + UDP-alpha-D-glucuronate = 15-O-(beta-D-glucuronosyl)-(5Z,8Z,11Z,14Z)-eicosatetraenoate + UDP + H(+). It catalyses the reaction 20-hydroxy-(5Z,8Z,11Z,14Z)-eicosatetraenoate + UDP-alpha-D-glucuronate = 20-O-(beta-D-glucuronosyl)-(5Z,8Z,11Z,14Z)-eicosatetraenoate + UDP + H(+). The catalysed reaction is (E)-ferulate + UDP-alpha-D-glucuronate = (E)-4-O-(beta-D-glucuronosyl)-ferulate + UDP + H(+). The enzyme catalyses prostaglandin B1 + UDP-alpha-D-glucuronate = 15-O-(beta-D-glucuronosyl)-prostaglandin B1 + UDP + H(+). It carries out the reaction mycophenolate + UDP-alpha-D-glucuronate = mycophenolic acid O-acyl-beta-D-glucuronide + UDP. It catalyses the reaction losartan + UDP-alpha-D-glucuronate = losartan-2-N-beta-D-glucuronide + UDP. The catalysed reaction is candesartan + UDP-alpha-D-glucuronate = candesartan O-beta-D-glucuronoside + UDP. The enzyme catalyses candesartan + UDP-alpha-D-glucuronate = candesartan-2-N-beta-D-glucuronide + UDP. It carries out the reaction zolasartan + UDP-alpha-D-glucuronate = zolarsartan O-beta-D-glucuronoside + UDP. Its function is as follows. UDP-glucuronosyltransferase (UGT) that catalyzes phase II biotransformation reactions in which lipophilic substrates are conjugated with glucuronic acid to increase the metabolite's water solubility, thereby facilitating excretion into either the urine or bile. Essential for the elimination and detoxification of drugs, xenobiotics and endogenous compounds. Catalyzes the glucuronidation of endogenous steroid hormones such as androgens (epitestosterone, androsterone) and estrogens (estradiol, epiestradiol, estriol, catechol estrogens). Also regulates the levels of retinoic acid, a major metabolite of vitamin A involved in apoptosis, cellular growth and differentiation, and embryonic development. Contributes to bile acid (BA) detoxification by catalyzing the glucuronidation of BA substrates, which are natural detergents for dietary lipids absorption. Involved in the glucuronidation of arachidonic acid (AA) and AA-derived eicosanoids including 15-HETE, 20-HETE, PGE2, PGB1 and F2-isoprostanes (8-iso-PGF2alpha and 5-epi-5-F2t-IsoP). Involved in the glucuronidation of the phytochemical ferulic acid at the phenolic or the carboxylic acid group. Involved in the glucuronidation of the AGTR1 angiotensin receptor antagonist losartan, caderastan and zolarsatan, drugs which can inhibit the effect of angiotensin II. Also metabolizes mycophenolate, an immunosuppressive agent. The polypeptide is UDP-glucuronosyltransferase 2B7 (Homo sapiens (Human)).